We begin with the raw amino-acid sequence, 213 residues long: Probable transaldolase (213 aa).

Lys83 acts as the Schiff-base intermediate with substrate in catalysis.

Belongs to the transaldolase family. Type 3B subfamily.

The protein resides in the cytoplasm. The catalysed reaction is D-sedoheptulose 7-phosphate + D-glyceraldehyde 3-phosphate = D-erythrose 4-phosphate + beta-D-fructose 6-phosphate. The protein operates within carbohydrate degradation; pentose phosphate pathway; D-glyceraldehyde 3-phosphate and beta-D-fructose 6-phosphate from D-ribose 5-phosphate and D-xylulose 5-phosphate (non-oxidative stage): step 2/3. In terms of biological role, transaldolase is important for the balance of metabolites in the pentose-phosphate pathway. The polypeptide is Probable transaldolase (Geobacillus sp. (strain WCH70)).